Reading from the N-terminus, the 107-residue chain is Ferredoxin CarAc (107 aa).

The 97-residue stretch at 6–102 (LKVCAASDMQ…VEVKEGEVYV (97 aa)) folds into the Rieske domain. Residues Cys-46, His-48, Cys-65, and His-68 each contribute to the [2Fe-2S] cluster site.

In terms of assembly, monomer. Carbazole 1,9a-dioxygenase complex consists of a terminal oxygenase component CarAa, a ferredoxin reductase component CarAd and a ferredoxin component CarAc. Requires [2Fe-2S] cluster as cofactor.

In terms of biological role, part of the multicomponent carbazole 1,9a-dioxygenase (CARDO), that converts carbazole (CAR) into 2-aminobiphenyl-2,3-diol. Acts as a mediator in the electron transfer from CarAd to CarAa. The chain is Ferredoxin CarAc (carAc) from Metapseudomonas resinovorans (Pseudomonas resinovorans).